Reading from the N-terminus, the 146-residue chain is Acidic phospholipase A2 D (146 aa).

The first 21 residues, Met1–Ser21, serve as a signal peptide directing secretion. Residues Asn22–Leu27 constitute a propeptide that is removed on maturation. Cystine bridges form between Cys38/Cys98, Cys53/Cys145, Cys55/Cys71, Cys70/Cys126, Cys77/Cys119, Cys87/Cys112, and Cys105/Cys117. Positions 54, 56, and 58 each coordinate Ca(2+). Residue His74 is part of the active site. Asp75 is a Ca(2+) binding site. Residue Asp120 is part of the active site.

Belongs to the phospholipase A2 family. Group I subfamily. D49 sub-subfamily. The cofactor is Ca(2+). In terms of tissue distribution, expressed by the venom gland.

The protein localises to the secreted. The enzyme catalyses a 1,2-diacyl-sn-glycero-3-phosphocholine + H2O = a 1-acyl-sn-glycero-3-phosphocholine + a fatty acid + H(+). Functionally, PLA2 catalyzes the calcium-dependent hydrolysis of the 2-acyl groups in 3-sn-phosphoglycerides. The protein is Acidic phospholipase A2 D of Naja sputatrix (Malayan spitting cobra).